A 300-amino-acid polypeptide reads, in one-letter code: (R)-3-hydroxydecanoyl-ACP:CoA transacylase (300 aa).

One can recognise an AB hydrolase-1 domain in the interval 29–253 (TIILVNGSLS…HTIRNAGHFI (225 aa)).

It participates in polyester biosynthesis; polyhydroxyalkanoate biosynthesis. Catalyzes the transfer of the acyl moiety from in vitro synthesized 3-hydroxydecanoyl-CoA to acyl carrier protein. This Pseudomonas aeruginosa (strain ATCC 15692 / DSM 22644 / CIP 104116 / JCM 14847 / LMG 12228 / 1C / PRS 101 / PAO1) protein is (R)-3-hydroxydecanoyl-ACP:CoA transacylase (phaG).